The sequence spans 225 residues: Uracil-DNA glycosylase (225 aa).

Asp-65 acts as the Proton acceptor in catalysis.

This sequence belongs to the uracil-DNA glycosylase (UDG) superfamily. UNG family.

The protein resides in the cytoplasm. It carries out the reaction Hydrolyzes single-stranded DNA or mismatched double-stranded DNA and polynucleotides, releasing free uracil.. In terms of biological role, excises uracil residues from the DNA which can arise as a result of misincorporation of dUMP residues by DNA polymerase or due to deamination of cytosine. This chain is Uracil-DNA glycosylase, found in Bacillus thuringiensis subsp. konkukian (strain 97-27).